A 167-amino-acid chain; its full sequence is Endoribonuclease YbeY (167 aa).

3 residues coordinate Zn(2+): H131, H135, and H141.

It belongs to the endoribonuclease YbeY family. It depends on Zn(2+) as a cofactor.

Its subcellular location is the cytoplasm. Single strand-specific metallo-endoribonuclease involved in late-stage 70S ribosome quality control and in maturation of the 3' terminus of the 16S rRNA. The polypeptide is Endoribonuclease YbeY (Rickettsia felis (strain ATCC VR-1525 / URRWXCal2) (Rickettsia azadi)).